The chain runs to 145 residues: D-aminoacyl-tRNA deacylase (145 aa).

The Gly-cisPro motif, important for rejection of L-amino acids signature appears at 137–138; the sequence is GP.

The protein belongs to the DTD family. As to quaternary structure, homodimer.

The protein resides in the cytoplasm. The catalysed reaction is glycyl-tRNA(Ala) + H2O = tRNA(Ala) + glycine + H(+). The enzyme catalyses a D-aminoacyl-tRNA + H2O = a tRNA + a D-alpha-amino acid + H(+). In terms of biological role, an aminoacyl-tRNA editing enzyme that deacylates mischarged D-aminoacyl-tRNAs. Also deacylates mischarged glycyl-tRNA(Ala), protecting cells against glycine mischarging by AlaRS. Acts via tRNA-based rather than protein-based catalysis; rejects L-amino acids rather than detecting D-amino acids in the active site. By recycling D-aminoacyl-tRNA to D-amino acids and free tRNA molecules, this enzyme counteracts the toxicity associated with the formation of D-aminoacyl-tRNA entities in vivo and helps enforce protein L-homochirality. In Lactobacillus delbrueckii subsp. bulgaricus (strain ATCC 11842 / DSM 20081 / BCRC 10696 / JCM 1002 / NBRC 13953 / NCIMB 11778 / NCTC 12712 / WDCM 00102 / Lb 14), this protein is D-aminoacyl-tRNA deacylase.